Reading from the N-terminus, the 232-residue chain is A-type ATP synthase subunit D (232 aa).

The protein belongs to the V-ATPase D subunit family. Has multiple subunits with at least A(3), B(3), C, D, E, F, H, I and proteolipid K(x).

It is found in the cell membrane. Component of the A-type ATP synthase that produces ATP from ADP in the presence of a proton gradient across the membrane. This chain is A-type ATP synthase subunit D, found in Methanopyrus kandleri (strain AV19 / DSM 6324 / JCM 9639 / NBRC 100938).